The following is a 422-amino-acid chain: UDP-N-acetylmuramoylalanine--D-glutamate ligase (422 aa).

102-108 (GTNGKTT) serves as a coordination point for ATP.

This sequence belongs to the MurCDEF family.

Its subcellular location is the cytoplasm. The enzyme catalyses UDP-N-acetyl-alpha-D-muramoyl-L-alanine + D-glutamate + ATP = UDP-N-acetyl-alpha-D-muramoyl-L-alanyl-D-glutamate + ADP + phosphate + H(+). It participates in cell wall biogenesis; peptidoglycan biosynthesis. In terms of biological role, cell wall formation. Catalyzes the addition of glutamate to the nucleotide precursor UDP-N-acetylmuramoyl-L-alanine (UMA). The polypeptide is UDP-N-acetylmuramoylalanine--D-glutamate ligase (Helicobacter pylori (strain ATCC 700392 / 26695) (Campylobacter pylori)).